The following is a 513-amino-acid chain: Meiotically up-regulated gene 133 protein (513 aa).

It belongs to the UPF0300 family.

The protein localises to the golgi apparatus. The protein resides in the vacuole membrane. Its function is as follows. Has a role in meiosis. The chain is Meiotically up-regulated gene 133 protein (mug133) from Schizosaccharomyces pombe (strain 972 / ATCC 24843) (Fission yeast).